Here is a 624-residue protein sequence, read N- to C-terminus: FAD-dependent monooxygenase apdD (624 aa).

The FAD site is built by E73 and D359.

This sequence belongs to the paxM FAD-dependent monooxygenase family. Requires FAD as cofactor.

The protein operates within secondary metabolite biosynthesis. FAD-dependent monooxygenase; part of the gene cluster that mediates the biosynthesis of aspyridones. The polyketide-amino acid backbone preaspyridone A is first assembled by the PKS-NRPS hybrid apdA. The assembly of preaspyridone A is initiated by loading of malonyl-CoA onto apdA, followed by decarboxylation to yield the acetyl starter unit. The growing polyketide chain then elongates into a tetraketide. The adpA PKS module catalyzes three Claisen condensations, as well as beta-keto processing and methylation. Alpha-methylation step during polyketide synthesis is a prerequisite and a key checkpoint for chain transfer between PKS and NRPS modules. The downstream NRPS module contains the condensation (C), adenylation (A), and thiolation (T) domains and catalyzes the incorporation of tyrosine via the formation of the L-tyrosinyl-thioester and the amide linkage between L-tyrosinyl-thioester and the tetraketide. The bimodular assembly line is terminated with a reductase (R) domain that facilitates formation and release of the tetramic acid product. Because apdA lacks a designated enoylreductase (ER) domain, the required activity is provided the enoyl reductase apdC. ApdC appears to operate with different stereoselectivity in different PKS cycle. Combined with apdC, apdA is proposed to synthesize preaspyridone A via about 20 enzymatic steps. A number of oxidative steps performed successively by the cytochrome P450 monooxygenases apdE and apdB are required for the conversion of preaspyridone A to aspyridone A. The cytochrome P450 monooxygenase apdE is responsible for the oxidative dephenylation of preaspyridone A. Finally, the predicted FAD-dependent monooxygenase apdD and the acyl-CoA dehydrogenase apdG may be involved in the transformation of aspyridone A into aspyridone B. This chain is FAD-dependent monooxygenase apdD, found in Emericella nidulans (strain FGSC A4 / ATCC 38163 / CBS 112.46 / NRRL 194 / M139) (Aspergillus nidulans).